Consider the following 337-residue polypeptide: Phosphoribosylformylglycinamidine cyclo-ligase (337 aa).

Belongs to the AIR synthase family.

The protein localises to the cytoplasm. The catalysed reaction is 2-formamido-N(1)-(5-O-phospho-beta-D-ribosyl)acetamidine + ATP = 5-amino-1-(5-phospho-beta-D-ribosyl)imidazole + ADP + phosphate + H(+). Its pathway is purine metabolism; IMP biosynthesis via de novo pathway; 5-amino-1-(5-phospho-D-ribosyl)imidazole from N(2)-formyl-N(1)-(5-phospho-D-ribosyl)glycinamide: step 2/2. The chain is Phosphoribosylformylglycinamidine cyclo-ligase from Gloeobacter violaceus (strain ATCC 29082 / PCC 7421).